The sequence spans 549 residues: Phosphoenolpyruvate carboxykinase (ATP) (549 aa).

250–257 (GLSGTGKT) lines the ATP pocket.

The protein belongs to the phosphoenolpyruvate carboxykinase (ATP) family. As to quaternary structure, homotetramer.

The catalysed reaction is oxaloacetate + ATP = phosphoenolpyruvate + ADP + CO2. It functions in the pathway carbohydrate biosynthesis; gluconeogenesis. The polypeptide is Phosphoenolpyruvate carboxykinase (ATP) (PCK1) (Saccharomyces cerevisiae (strain ATCC 204508 / S288c) (Baker's yeast)).